The sequence spans 285 residues: MKFYKYHALGNDYLVINPQDLKFPLTPEKIKIICHRNFGIGSDGILLGPLASTKAQFALRIFNPDGSEAEKSGNGLRIFSRYLWDMGLVDEKPFSIETAGGIVESAIKDAGKTVQVEMGKVSFWSRDIPVIGDDREVIQEKIFLDEGIFTFCAATIGNPHCVILLDDINSEVARNFGPIFEGYPLFPNRTNVQFMKVLDRSTIQIEIWERGAGYTLASGSSSSAAAATAHKLGLCDSKIIVKMPGGDILIQIKDDFHISMTDSVTKLAQGELSTEIFAIETVINI.

Residues Asn-11, Asn-63, 73 to 74, Asn-158, Asn-191, 209 to 210, and 219 to 220 contribute to the substrate site; these read GN, ER, and GS.

The protein belongs to the diaminopimelate epimerase family. In terms of assembly, homodimer.

It is found in the cytoplasm. The catalysed reaction is (2S,6S)-2,6-diaminopimelate = meso-2,6-diaminopimelate. It participates in amino-acid biosynthesis; L-lysine biosynthesis via DAP pathway; DL-2,6-diaminopimelate from LL-2,6-diaminopimelate: step 1/1. Catalyzes the stereoinversion of LL-2,6-diaminopimelate (L,L-DAP) to meso-diaminopimelate (meso-DAP), a precursor of L-lysine and an essential component of the bacterial peptidoglycan. In Nostoc sp. (strain PCC 7120 / SAG 25.82 / UTEX 2576), this protein is Diaminopimelate epimerase 2.